The following is a 117-amino-acid chain: uncharacterized protein (117 aa).

A helical membrane pass occupies residues 76 to 96; the sequence is FIMSSGCFLIASLSCVGLTVF.

The protein resides in the membrane. This is an uncharacterized protein from Saccharomyces cerevisiae (strain ATCC 204508 / S288c) (Baker's yeast).